Reading from the N-terminus, the 377-residue chain is Nucleosome assembly protein 1;3 (377 aa).

A coiled-coil region spans residues 26–80; sequence VNVLKNKLQGLTGKHSNVLENLSPNVRKRVEVLREIQTQHDELEAKFFEERAALE. The Nuclear export signal signature appears at 47–62; that stretch reads LSPNVRKRVEVLREIQ. The short motif at 223 to 228 is the Nuclear localization signal element; it reads KKKPKK. The interval 298 to 377 is disordered; it reads EAAQDEDYID…GERPPECKQQ (80 aa). Residues 300–341 are compositionally biased toward acidic residues; the sequence is AQDEDYIDLEDDEDEEDDEDEDEDEEDEEEEDEDEDDDDEDE. Over residues 345–357 the composition is skewed to basic residues; the sequence is KTKKKSSAGRKRS. A Cysteine methyl ester modification is found at Cys374. Cys374 is lipidated: S-farnesyl cysteine. A propeptide spans 375 to 377 (removed in mature form); the sequence is KQQ.

It belongs to the nucleosome assembly protein (NAP) family. As to quaternary structure, can form homomeric and heteromeric protein complexes with NAP1;4. Binds histones H2A and H2B in vivo. Also able to bind histones H1 and H4 in vitro. Interacts with CYCB1;1 and with alpha tubulin.

It is found in the nucleus. The protein resides in the cytoplasm. In terms of biological role, may modulate chromatin structure by regulation of nucleosome assembly/disassembly. Could function together with B-type cyclins in the regulation of microtubule dynamics. In Nicotiana tabacum (Common tobacco), this protein is Nucleosome assembly protein 1;3 (NAP1;3).